The following is a 330-amino-acid chain: DNA-directed RNA polymerase subunit alpha (330 aa).

Residues 1 to 235 (MQGSVTEFLK…EQLEAFVDLR (235 aa)) form an alpha N-terminal domain (alpha-NTD) region. The interval 249–330 (FDPILLRPVD…WPPASIADNE (82 aa)) is alpha C-terminal domain (alpha-CTD).

Belongs to the RNA polymerase alpha chain family. In terms of assembly, homodimer. The RNAP catalytic core consists of 2 alpha, 1 beta, 1 beta' and 1 omega subunit. When a sigma factor is associated with the core the holoenzyme is formed, which can initiate transcription.

The catalysed reaction is RNA(n) + a ribonucleoside 5'-triphosphate = RNA(n+1) + diphosphate. In terms of biological role, DNA-dependent RNA polymerase catalyzes the transcription of DNA into RNA using the four ribonucleoside triphosphates as substrates. In Yersinia enterocolitica serotype O:8 / biotype 1B (strain NCTC 13174 / 8081), this protein is DNA-directed RNA polymerase subunit alpha.